Consider the following 455-residue polypeptide: Ammonium transporter Rh type B (455 aa).

The Cytoplasmic portion of the chain corresponds to 1 to 10 (MARVPRHRRL). Residues 11-31 (VLPLLCLLFQGATALLFAIFV) traverse the membrane as a helical segment. Residues 32 to 58 (RYNHETDAALWHWGNHSNVDNEFYFRY) are Extracellular-facing. N-linked (GlcNAc...) asparagine glycosylation occurs at asparagine 46. A helical transmembrane segment spans residues 59–79 (PSFQDVHVMVFVGFGFLMVFL). Over 80 to 83 (QRYG) the chain is Cytoplasmic. The helical transmembrane segment at 84–104 (FSSVGFTFLVASLTLQWATLL) threads the bilayer. The Extracellular portion of the chain corresponds to 105-121 (QGFLHSFHGGHIHVGVE). A helical membrane pass occupies residues 122 to 142 (SLINADFCAGAVLISFGAVLG). At 143-146 (KTGP) the chain is on the cytoplasmic side. Residues 147 to 167 (AQLLLMALLEAVLFSVNEFIL) traverse the membrane as a helical segment. Residues 168–175 (LSLLGVRD) are Extracellular-facing. Residues 176-198 (AGGSMTIHTFGAYFGLFLSWVLY) form a helical membrane-spanning segment. The Cytoplasmic portion of the chain corresponds to 199-216 (RSQLEKSRHRQSSVYNSD). Residues 217-237 (LFAMIGTIFLWVFWPSFNSAP) form a helical membrane-spanning segment. Over 238-248 (TALGDGQHRTV) the chain is Extracellular. The chain crosses the membrane as a helical span at residues 249–269 (VNTYYSLTASTLSTFALSALV). The Cytoplasmic portion of the chain corresponds to 270-279 (SGDGRLDMVH). A helical transmembrane segment spans residues 280–300 (VQNAALAGGVVVGTSSEMMLT). Position 301 (proline 301) is a topological domain, extracellular. Residues 302–322 (FGALAAGFLAGTVSTLGYKFF) form a helical membrane-spanning segment. The Cytoplasmic portion of the chain corresponds to 323–343 (TPILESRFKLQDTCGVHNLHG). Residues 344 to 364 (MPGVLGAILGVVVAALATHEA) traverse the membrane as a helical segment. Topologically, residues 365–390 (YGDGLQSVFPLIAKGQRSATSQAVYQ) are extracellular. Residues 391–411 (LFGMFVTLVFASVGGSLGGLL) traverse the membrane as a helical segment. The Cytoplasmic segment spans residues 412 to 455 (LRLPFLDSPPDSQCFEDQVYWEVPGEQETETQRPLRGGESDTRA). The interaction with ANK3 stretch occupies residues 413 to 421 (RLPFLDSPP). A disordered region spans residues 434 to 455 (VPGEQETETQRPLRGGESDTRA). Residues 441 to 455 (ETQRPLRGGESDTRA) show a composition bias toward basic and acidic residues.

It belongs to the ammonium transporter (TC 2.A.49) family. Rh subfamily. As to quaternary structure, interacts (via C-terminus) with ANK2 and ANK3; required for targeting to the basolateral membrane. Post-translationally, N-glycosylated. Expressed in kidney by connecting segments and collecting tubules. Also expressed in liver by perivenous hepatocytes. Expressed in the forestomach and the fundus of the stomach. Expressed in duodenum, jejunum, ileum and colon at the level of villous (at protein level). Specifically expressed in kidney where it is restricted to the epithelial linings of the convoluted tubules and the loop of Henle. Also detected in ovary. Expressed by hepatocytes and dermal hair follicles and papillae.

It is found in the cell membrane. The protein localises to the basolateral cell membrane. The catalysed reaction is NH4(+)(in) = NH4(+)(out). It catalyses the reaction methylamine(out) = methylamine(in). The enzyme catalyses CO2(out) = CO2(in). Inhibited by amiloride. In terms of biological role, ammonium transporter involved in the maintenance of acid-base homeostasis. Transports ammonium and its related derivative methylammonium across the basolateral plasma membrane of epithelial cells likely contributing to renal transepithelial ammonia transport and ammonia metabolism. May transport either NH4(+) or NH3 ammonia species predominantly mediating an electrogenic NH4(+) transport. May act as a CO2 channel providing for renal acid secretion. The protein is Ammonium transporter Rh type B (Rhbg) of Mus musculus (Mouse).